The chain runs to 141 residues: Large ribosomal subunit protein uL11 (141 aa).

This sequence belongs to the universal ribosomal protein uL11 family. Part of the ribosomal stalk of the 50S ribosomal subunit. Interacts with L10 and the large rRNA to form the base of the stalk. L10 forms an elongated spine to which L12 dimers bind in a sequential fashion forming a multimeric L10(L12)X complex. Post-translationally, one or more lysine residues are methylated.

Its function is as follows. Forms part of the ribosomal stalk which helps the ribosome interact with GTP-bound translation factors. The protein is Large ribosomal subunit protein uL11 of Lactococcus lactis subsp. cremoris (strain MG1363).